The chain runs to 167 residues: Photosystem I assembly protein Ycf3 (167 aa).

TPR repeat units lie at residues 35-68, 72-105, and 120-153; these read AFTYYRDGMSAQSEGEYAEALQNYYEAMRLEIDP, SYILYNIGLIHTSNGEHAKAIEYYLQALERNPSL, and GEQAVEKEDLETSEAWFDQAADYWKQAIALAPNN.

The protein belongs to the Ycf3 family.

It localises to the plastid. The protein resides in the chloroplast thylakoid membrane. Functionally, essential for the assembly of the photosystem I (PSI) complex. May act as a chaperone-like factor to guide the assembly of the PSI subunits. The protein is Photosystem I assembly protein Ycf3 of Zygnema circumcarinatum (Green alga).